The primary structure comprises 71 residues: Biotinylated protein TB7.3 (71 aa).

Residues 2–71 (AEDVRAEIVA…QAGDLIAVIS (70 aa)) form the Biotinyl-binding domain. K37 bears the N6-biotinyllysine mark.

In Mycobacterium bovis (strain ATCC BAA-935 / AF2122/97), this protein is Biotinylated protein TB7.3.